Reading from the N-terminus, the 86-residue chain is Antifungal protein 2 (86 aa).

Positions 1-21 (MHLSTALFSAIALLAATQVIG) are cleaved as a signal peptide. 3 disulfide bridges follow: cysteine 43/cysteine 57, cysteine 45/cysteine 74, and cysteine 49/cysteine 83. Residues 44-54 (NCPNNCKHKKG) are lipid-binding. The Gamma-core motif lies at 72–83 (GKCEWQGGQLNC).

The protein resides in the secreted. Cysteine-rich antifungal protein highly effective against yeasts such as clinically relevant Candida species, including the multidrug-resistant pathogen Candida auris. Does not cause metabolic inactivity and apoptosis induction, but the fungal cell-killing activity is connected to its pore-forming ability in the cell membrane. NFAP2 has a low potential to trigger resistance in C.albicans in vitro, and the developed tolerance to NFAP2 is not associated with severe phenotypic changes compared with development of resistance to generic fluconazole. This chain is Antifungal protein 2, found in Neosartorya fischeri (strain ATCC 1020 / DSM 3700 / CBS 544.65 / FGSC A1164 / JCM 1740 / NRRL 181 / WB 181) (Aspergillus fischerianus).